The following is a 405-amino-acid chain: tRNA (uracil(54)-C(5))-methyltransferase (405 aa).

The [4Fe-4S] cluster site is built by Cys61, Cys67, Cys70, and Cys137. S-adenosyl-L-methionine is bound by residues Gln252, Tyr278, Thr283, 299–300, Asp326, and Asp340; that span reads DS. Catalysis depends on Cys367, which acts as the Nucleophile. The Proton acceptor role is filled by Glu399.

The protein belongs to the class I-like SAM-binding methyltransferase superfamily. RNA M5U methyltransferase family.

It carries out the reaction uridine(54) in tRNA + S-adenosyl-L-methionine = 5-methyluridine(54) in tRNA + S-adenosyl-L-homocysteine + H(+). With respect to regulation, activated by magnesium ions. Functionally, catalyzes the formation of 5-methyl-uridine at position 54 (m5U54) in tRNA. This chain is tRNA (uracil(54)-C(5))-methyltransferase, found in Pyrococcus abyssi (strain GE5 / Orsay).